A 505-amino-acid polypeptide reads, in one-letter code: Glycerol kinase (505 aa).

An ADP-binding site is contributed by T14. ATP-binding residues include T14, T15, and S16. T14 lines the sn-glycerol 3-phosphate pocket. Residue R18 coordinates ADP. Sn-glycerol 3-phosphate contacts are provided by R84, E85, Y136, and D246. R84, E85, Y136, D246, and Q247 together coordinate glycerol. ADP is bound by residues T268 and G311. The ATP site is built by T268, G311, Q315, and G412. G412 and N416 together coordinate ADP.

Belongs to the FGGY kinase family.

It catalyses the reaction glycerol + ATP = sn-glycerol 3-phosphate + ADP + H(+). It functions in the pathway polyol metabolism; glycerol degradation via glycerol kinase pathway; sn-glycerol 3-phosphate from glycerol: step 1/1. With respect to regulation, inhibited by fructose 1,6-bisphosphate (FBP). Its function is as follows. Key enzyme in the regulation of glycerol uptake and metabolism. Catalyzes the phosphorylation of glycerol to yield sn-glycerol 3-phosphate. The chain is Glycerol kinase from Vibrio cholerae serotype O1 (strain M66-2).